Here is a 1216-residue protein sequence, read N- to C-terminus: Regulator of telomere elongation helicase 1 (1216 aa).

The 289-residue stretch at 7–295 folds into the Helicase ATP-binding domain; it reads KGVTVDFPFQ…TKVAQQAELH (289 aa). 42-49 contributes to the ATP binding site; the sequence is SPTGTGKT. The [4Fe-4S] cluster site is built by cysteine 144, cysteine 162, cysteine 171, and cysteine 206. Residues 150 to 166 carry the Nuclear localization signal motif; the sequence is KKQESNHMQVHLCRRKV. The DEAH box motif lies at 249 to 252; it reads DEAH. Residues 874-880 carry the Nuclear localization signal motif; it reads QRGRRRK. Disordered regions lie at residues 978 to 1018 and 1140 to 1172; these read GCSS…ATRQ and GPGT…RKTQ. Positions 1172–1179 match the PIP-box motif; sequence QSKISSFL.

The protein belongs to the helicase family. RAD3/XPD subfamily. As to quaternary structure, interacts with TERF1. Interacts (via PIP-box) with PCNA; the interaction is direct and essential for suppressing telomere fragility. Interacts with MMS19; the interaction mediates the association of RTEL1 with the cytosolic iron-sulfur protein assembly (CIA) complex. In terms of tissue distribution, highly expressed in adult testis, liver and ovary.

It is found in the nucleus. It carries out the reaction ATP + H2O = ADP + phosphate + H(+). A probable ATP-dependent DNA helicase implicated in telomere-length regulation, DNA repair and the maintenance of genomic stability. Acts as an anti-recombinase to counteract toxic recombination and limit crossover during meiosis. Regulates meiotic recombination and crossover homeostasis by physically dissociating strand invasion events and thereby promotes noncrossover repair by meiotic synthesis dependent strand annealing (SDSA) as well as disassembly of D loop recombination intermediates. Also disassembles T loops and prevents telomere fragility by counteracting telomeric G4-DNA structures, which together ensure the dynamics and stability of the telomere. This is Regulator of telomere elongation helicase 1 from Bos taurus (Bovine).